The sequence spans 253 residues: CD151 antigen (253 aa).

Topologically, residues 1–18 (MGEFNEKKTTCGTVCLKY) are cytoplasmic. S-palmitoyl cysteine attachment occurs at residues cysteine 11 and cysteine 15. Residues 19–39 (LLFTYNCCFWLAGLAVMAVGI) form a helical membrane-spanning segment. The Extracellular portion of the chain corresponds to 40-57 (WTLALKSDYISLLASGTY). A helical membrane pass occupies residues 58–78 (LATAYILVVAGTVVMVTGVLG). Topologically, residues 79 to 91 (CCATFKERRNLLR) are cytoplasmic. Residues 92-112 (LYFILLLIIFLLEIIAGILAY) traverse the membrane as a helical segment. The Extracellular segment spans residues 113–221 (AYYQQLNTEL…LETFIQEHLR (109 aa)). N-linked (GlcNAc...) asparagine glycosylation is present at asparagine 159. A helical membrane pass occupies residues 222–242 (VIGAVGIGIACVQVFGMIFTC). S-palmitoyl cysteine attachment occurs at residues cysteine 242 and cysteine 243. Over 243–253 (CLYRSLKLEHY) the chain is Cytoplasmic.

The protein belongs to the tetraspanin (TM4SF) family. Interacts with integrins ITGA3:ITGB1, ITGA5:ITGB1, ITGA3:ITGB1 and ITGA6:ITGB4 and with CD9 and CD181. Interacts (via the second extracellular domain) with integrin ITGAV:ITGB3. Interacts with ITGA3; this interaction modulates ITGA3 glycosylation pattern. Interacts with F11R. Interacts with RAC1 and CDC42; these interactions mediate physical association of RAC1 and CDC42 with integrin adhesion receptor complexes. Palmitoylated. Palmitoylation by ZDHHC2 regulates CD151 expression, association with other tetraspanin family proteins and function in cell adhesion. Post-translationally, ubiquitinated by RNF128 on lysine residues present in the tetraspanin amino terminus via 'Lys-48'-linked ubiquitin leading to proteasomal degradation. Expressed in a variety of tissues including vascular endothelium and epidermis. Expressed on erythroid cells, with a higher level of expression in erythroid precursors than on mature erythrocytes. Acts as a sensitive T-cell activation marker.

The protein resides in the cell membrane. In terms of biological role, structural component of specialized membrane microdomains known as tetraspanin-enriched microdomains (TERMs), which act as platforms for receptor clustering and signaling. Plays a role in various cellular and molecular mechanism through its association with both integrin and non-integrin proteins. These interactions facilitate critical cellular functions, including cell-to-cell communication, wound healing, platelet aggregation, trafficking, cell motility, and angiogenesis. Via interaction with JAM-A/F11R and integrin ITGA3:ITGB1, promotes the recruitment of signaling molecules such as RAC1, CDC42 and RhoGTPases to facilitate the polarization of epithelial cells and the reorganization of the actin cytoskeleton, which are critical steps in cell migration process. Regulates the glycosylation pattern of ITGA3:ITGB1 thereby modulating its activity. Plays an essential role in the maintenance of central laminin-binding integrin ITGA6:ITGB4-containing adhesion complexes. Essential for the proper assembly of the glomerular and tubular basement membranes in kidney. Contributes to T-cell activation by modulating integrin signaling leading to activation of downstream targets PTK2 and MAPK1/MAPK3. Functionally, (Microbial infection) Plays a role in human papillomavirus 16/HPV-16 endocytosis upon binding to cell surface receptor. (Microbial infection) Plays a role in human cytomegalovirus entry into host cell by contributing to entry receptor binding, membrane fusion, or release of the capsid. This chain is CD151 antigen (CD151), found in Homo sapiens (Human).